Reading from the N-terminus, the 669-residue chain is DNA ligase (669 aa).

Position 35–39 (35–39 (DFEYD)) interacts with NAD(+). The segment at 52–71 (YPEWDSPDSPTHRVGSDKTE) is disordered. The segment covering 61 to 71 (PTHRVGSDKTE) has biased composition (basic and acidic residues). NAD(+) is bound by residues 84 to 85 (SL) and glutamate 115. Lysine 117 acts as the N6-AMP-lysine intermediate in catalysis. Residues arginine 138, glutamate 175, lysine 290, and lysine 314 each contribute to the NAD(+) site. Zn(2+) contacts are provided by cysteine 408, cysteine 411, cysteine 426, and cysteine 432. One can recognise a BRCT domain in the interval 590 to 669 (PVSARLAGKT…EEEFLRLIEE (80 aa)).

This sequence belongs to the NAD-dependent DNA ligase family. LigA subfamily. Requires Mg(2+) as cofactor. The cofactor is Mn(2+).

The enzyme catalyses NAD(+) + (deoxyribonucleotide)n-3'-hydroxyl + 5'-phospho-(deoxyribonucleotide)m = (deoxyribonucleotide)n+m + AMP + beta-nicotinamide D-nucleotide.. Its function is as follows. DNA ligase that catalyzes the formation of phosphodiester linkages between 5'-phosphoryl and 3'-hydroxyl groups in double-stranded DNA using NAD as a coenzyme and as the energy source for the reaction. It is essential for DNA replication and repair of damaged DNA. In Porphyromonas gingivalis (strain ATCC 33277 / DSM 20709 / CIP 103683 / JCM 12257 / NCTC 11834 / 2561), this protein is DNA ligase.